A 259-amino-acid polypeptide reads, in one-letter code: 3-hydroxypropionyl-coenzyme A dehydratase (259 aa).

The active-site Nucleophile is the glutamate 113. The active-site Proton acceptor is glutamate 133.

Belongs to the enoyl-CoA hydratase/isomerase family. In terms of assembly, monomer.

The catalysed reaction is 3-hydroxypropanoyl-CoA = acryloyl-CoA + H2O. In terms of biological role, plays a role in autotrophic carbon fixation via the 3-hydroxypropionate/4-hydroxybutyrate cycle. Catalyzes the reversible dehydration of 3-hydroxypropionyl-CoA to form acryloyl-CoA, and the reversible dehydration of (S)-3-hydroxybutyryl-CoA to form crotonyl-CoA. Inactive towards (R)-3-hydroxybutyryl-CoA. The polypeptide is 3-hydroxypropionyl-coenzyme A dehydratase (Metallosphaera sedula (strain ATCC 51363 / DSM 5348 / JCM 9185 / NBRC 15509 / TH2)).